The chain runs to 266 residues: Norfluorocurarine synthase 1 (266 aa).

One can recognise an AB hydrolase-1 domain in the interval 11–121 (HFVLVHGAGH…VMPDAVNPPS (111 aa)). Active-site residues include serine 86, aspartate 216, and histidine 244.

Belongs to the AB hydrolase superfamily. Homodimer.

The enzyme catalyses 17-dehydropreakuammicine + H2O = norfluorocurarine + methanol + CO2. It participates in alkaloid biosynthesis. Its function is as follows. Hydrolase involved in the biosynthesis of curare monoterpene indole alkaloids (MIAs), natural products such as diaboline, a pharmacologically active compound used to regulate blood pressure. Curare alkaloids act as animal glycine receptor antagonists. Catalyzes the conversion of dehydropreakuammicine to norfluorocurarine. This is Norfluorocurarine synthase 1 from Strychnos sp.